A 344-amino-acid chain; its full sequence is Aurora kinase B (344 aa).

The residue at position 35 (Thr-35) is a Phosphothreonine. Residues 46–65 (NAQPTAAPGQKVVENSSGTP) are disordered. Residue Ser-62 is modified to Phosphoserine. Thr-64 is subject to Phosphothreonine. A Protein kinase domain is found at 77 to 327 (FEIGRPLGKG…LAQVSAHPWV (251 aa)). ATP contacts are provided by residues 83–91 (LGKGKFGNV) and Lys-106. Asp-200 functions as the Proton acceptor in the catalytic mechanism. N6-acetyllysine is present on Lys-215. A Phosphoserine modification is found at Ser-227. Residue Thr-232 is modified to Phosphothreonine; by autocatalysis.

The protein belongs to the protein kinase superfamily. Ser/Thr protein kinase family. Aurora subfamily. Component of the chromosomal passenger complex (CPC) composed of at least BIRC5/survivin, CDCA8/borealin, INCENP, AURKB or AURKC; predominantly independent AURKB- and AURKC-containing complexes exist. Associates with RACGAP1 during M phase. Interacts with SPDYC; this interaction may be required for proper localization of active, Thr-232-phosphorylated AURKB form during prometaphase and metaphase. Interacts with p53/TP53. Interacts (via the middle kinase domain) with NOC2L (via the N- and C-terminus domains). Interacts with CDCA1. Interacts with EVI5. Interacts with JTB. Interacts with NDC80. Interacts with PSMA3. Interacts with RNF2/RING1B. Interacts with SEPTIN1. Interacts with SIRT2. Interacts with TACC1. Interacts with TTC28. Post-translationally, the phosphorylation of Thr-232 requires the binding to INCENP and occurs by means of an autophosphorylation mechanism. Thr-232 phosphorylation is indispensable for the AURKB kinase activity. In terms of processing, acetylated at Lys-215 by KAT5 at kinetochores, increasing AURKB activity and promoting accurate chromosome segregation in mitosis. Ubiquitinated by different BCR (BTB-CUL3-RBX1) E3 ubiquitin ligase complexes. Ubiquitinated by the BCR(KLHL9-KLHL13) E3 ubiquitin ligase complex, ubiquitination leads to removal from mitotic chromosomes and is required for cytokinesis. During anaphase, the BCR(KLHL21) E3 ubiquitin ligase complex recruits the CPC complex from chromosomes to the spindle midzone and mediates the ubiquitination of AURKB. Ubiquitination of AURKB by BCR(KLHL21) E3 ubiquitin ligase complex may not lead to its degradation by the proteasome. Deubiquitinated by USP35; inhibiting CDH1-mediated degradation of AURKB.

It localises to the nucleus. The protein resides in the chromosome. The protein localises to the centromere. It is found in the kinetochore. Its subcellular location is the cytoplasm. It localises to the cytoskeleton. The protein resides in the spindle. The protein localises to the midbody. The enzyme catalyses L-seryl-[protein] + ATP = O-phospho-L-seryl-[protein] + ADP + H(+). It carries out the reaction L-threonyl-[protein] + ATP = O-phospho-L-threonyl-[protein] + ADP + H(+). With respect to regulation, activity is greatly increased when AURKB is within the CPC complex. In particular, AURKB-phosphorylated INCENP acts as an activator of AURKB. Positive feedback between HASPIN and AURKB contributes to CPC localization. In terms of biological role, serine/threonine-protein kinase component of the chromosomal passenger complex (CPC), a complex that acts as a key regulator of mitosis. The CPC complex has essential functions at the centromere in ensuring correct chromosome alignment and segregation and is required for chromatin-induced microtubule stabilization and spindle assembly. Involved in the bipolar attachment of spindle microtubules to kinetochores and is a key regulator for the onset of cytokinesis during mitosis. Required for central/midzone spindle assembly and cleavage furrow formation. Key component of the cytokinesis checkpoint, a process required to delay abscission to prevent both premature resolution of intercellular chromosome bridges and accumulation of DNA damage: phosphorylates CHMP4C, leading to retain abscission-competent VPS4 (VPS4A and/or VPS4B) at the midbody ring until abscission checkpoint signaling is terminated at late cytokinesis. AURKB phosphorylates the CPC complex subunits BIRC5/survivin, CDCA8/borealin and INCENP. Phosphorylation of INCENP leads to increased AURKB activity. Other known AURKB substrates involved in centromeric functions and mitosis are CENPA, DES/desmin, GPAF, KIF2C, NSUN2, RACGAP1, SEPTIN1, VIM/vimentin, HASPIN, and histone H3. A positive feedback loop involving HASPIN and AURKB contributes to localization of CPC to centromeres. Phosphorylation of VIM controls vimentin filament segregation in cytokinetic process, whereas histone H3 is phosphorylated at 'Ser-10' and 'Ser-28' during mitosis (H3S10ph and H3S28ph, respectively). AURKB is also required for kinetochore localization of BUB1 and SGO1. Phosphorylation of p53/TP53 negatively regulates its transcriptional activity. Key regulator of active promoters in resting B- and T-lymphocytes: acts by mediating phosphorylation of H3S28ph at active promoters in resting B-cells, inhibiting RNF2/RING1B-mediated ubiquitination of histone H2A and enhancing binding and activity of the USP16 deubiquitinase at transcribed genes. Acts as an inhibitor of CGAS during mitosis: catalyzes phosphorylation of the N-terminus of CGAS during the G2-M transition, blocking CGAS liquid phase separation and activation, and thereby preventing CGAS-induced autoimmunity. Phosphorylates KRT5 during anaphase and telophase. Phosphorylates ATXN10 which promotes phosphorylation of ATXN10 by PLK1 and may play a role in the regulation of cytokinesis and stimulating the proteasomal degradation of ATXN10. The sequence is that of Aurora kinase B (AURKB) from Bos taurus (Bovine).